A 349-amino-acid chain; its full sequence is Phosphoribosylformylglycinamidine cyclo-ligase (349 aa).

It belongs to the AIR synthase family.

Its subcellular location is the cytoplasm. The catalysed reaction is 2-formamido-N(1)-(5-O-phospho-beta-D-ribosyl)acetamidine + ATP = 5-amino-1-(5-phospho-beta-D-ribosyl)imidazole + ADP + phosphate + H(+). The protein operates within purine metabolism; IMP biosynthesis via de novo pathway; 5-amino-1-(5-phospho-D-ribosyl)imidazole from N(2)-formyl-N(1)-(5-phospho-D-ribosyl)glycinamide: step 2/2. This chain is Phosphoribosylformylglycinamidine cyclo-ligase, found in Lactobacillus delbrueckii subsp. bulgaricus (strain ATCC BAA-365 / Lb-18).